We begin with the raw amino-acid sequence, 1483 residues long: Rho GTPase-activating protein 23 (1483 aa).

Residues 15-34 (PEPRPPQLPLGPRDGCSSGR) are disordered. The region spanning 71-155 (HCILKEEENG…TLELSIMPKD (85 aa)) is the PDZ domain. Disordered stretches follow at residues 212–276 (ISAL…PGSR) and 300–345 (AGER…GQEG). The span at 316 to 325 (SQDRLEDVTT) shows a compositional bias: basic and acidic residues. Positions 331–342 (CSTSQDALSQLG) are enriched in polar residues. Phosphoserine is present on residues Ser-361 and Ser-372. The segment at 385–407 (PSARTSACPSRDLTQAPPPSGLQ) is disordered. At Ser-421 the chain carries Phosphoserine. Disordered stretches follow at residues 448-485 (SLAQ…DHRD) and 508-527 (NLGF…RLGR). Residues Ser-515, Ser-579, Ser-607, and Ser-619 each carry the phosphoserine modification. Thr-652 carries the phosphothreonine modification. Phosphoserine occurs at positions 655, 658, and 673. Residues 684 to 804 (DIRREGWLYY…WIRAIRENSR (121 aa)) form the PH domain. The tract at residues 827-848 (KVSHSSGPKADSSPKGSRGLGG) is disordered. Lys-850 is covalently cross-linked (Glycyl lysine isopeptide (Lys-Gly) (interchain with G-Cter in SUMO2)). 4 disordered regions span residues 860–879 (RGLR…VAAP), 1093–1150 (FSDD…SWVP), 1171–1361 (KRKK…GSRP), and 1419–1469 (ELGG…LQGL). Positions 901 to 1093 (IRLEECQPAT…TLIQHSDWFF (193 aa)) constitute a Rho-GAP domain. The segment covering 1099–1110 (KGERTPVDDKEP) has biased composition (basic and acidic residues). Composition is skewed to polar residues over residues 1133–1144 (GSDSTTCSSAKS) and 1236–1248 (SIVS…STMD). Over residues 1338 to 1351 (GSASSSSQESLRPP) the composition is skewed to low complexity. A compositionally biased stretch (polar residues) spans 1440–1457 (SGLSSLESTKARASSAAS).

GTPase activator for the Rho-type GTPases by converting them to an inactive GDP-bound state. This Mus musculus (Mouse) protein is Rho GTPase-activating protein 23 (Arhgap23).